Consider the following 573-residue polypeptide: Ribonuclease J (573 aa).

Positions 1 to 29 are disordered; the sequence is MENQERKPRRRRRRRPQEGSQGGPQDHVE. Residues H93, H95, D97, H98, H168, and D190 each contribute to the Zn(2+) site. Substrate contacts are provided by residues 259–261 and 390–394; these read ASH and HASGH. Position 416 (H416) interacts with Zn(2+).

The protein belongs to the metallo-beta-lactamase superfamily. RNA-metabolizing metallo-beta-lactamase-like family. Bacterial RNase J subfamily. As to quaternary structure, homodimer. May be a subunit of the RNA degradosome. Zn(2+) is required as a cofactor.

It is found in the cytoplasm. Functionally, an RNase that has endonuclease and possibly 5'-3' exonuclease activity. Probably involved in maturation of rRNA and in some organisms also mRNA maturation and/or decay. The chain is Ribonuclease J from Thermus thermophilus (strain ATCC BAA-163 / DSM 7039 / HB27).